The following is a 485-amino-acid chain: Outer membrane protein OprM (485 aa).

The first 17 residues, M1–G17, serve as a signal peptide directing secretion. The N-palmitoyl cysteine moiety is linked to residue C18. A lipid anchor (S-diacylglycerol cysteine) is attached at C18.

Belongs to the outer membrane factor (OMF) (TC 1.B.17) family. Component of the MexAB-OprM multidrug efflux complex, composed of six MexA subunits forming a hexameric tube, binding to a MexB trimer, which interact with the trimeric OprM outer membrane channel protein. The OprM homotrimer forms a 135 Angstroms-long pore. It consists of a beta-barrel, which is probably inserted in the outer membrane, and an alpha-barrel formed by alpha-helices which probably spans the periplasm. In the ground state the periplasmic end is closed, while the outer membrane end opening is 6-8 Angstroms in diameter. OprM does not directly contact MexB; instead, MexA joins MexB and OprM by forming a funnel-like hexamer anchored to the inner membrane. MexA may initially form a hexameric ring complex with MexB prior to OprM, then OprM undergoes a conformational change as it contacts MexA, allowing the periplasmic gate to open. It is thought that, under high intracellular substrate concentration, MexB ejects substrate into the tunnel formed by MexA-OprM; as the substrate level declines, conformational changes in MexB cause efflux to reduce and stop and the complex shifts to the closed state. MexB subunit acts as a substrate:proton antiporter and activity is enhanced significantly when in complex with MexA and OprM, in vitro.

Its subcellular location is the cell outer membrane. Export of antibiotics and solvents is dramatically decreased in the presence of the protonophore carbonyl cyanide m-chlorophenylhydrazone (CCCP), therefore may be driven by a proton gradient. Antibiotic efflux is inhibited by pyridopyrimidine derivatives, such as ABI-PP, acting by binding to a hydrophobic pocket in MexB. The outer membrane component of the MexAB-OprM efflux system that confers multidrug resistance. Functions as the major efflux pump for n-hexane and p-xylene efflux. Has been shown in one study to be involved in the active efflux of the autoinducer N-(3-oxododecanoyl) homoserine lactone, thereby playing an indirect role in quorum-sensing; but has been shown in another study not to be involved in efflux of this autoinducer. Over-expression of the pump increases antibiotic and solvent efflux capacities. Can replace the OprJ outer membrane component of the MexCD-OprJ pump; the antibiotics exported are those exported by the intact MexCD pump, showing that efflux substrate specificity is not conferred by this component. Serves as the outer membrane component for the MexXY efflux system. Implicated in the secretion of the siderophore pyoverdine. OprM is probably involved in the efflux of the siderophore across the outer membrane. This Pseudomonas aeruginosa (strain ATCC 15692 / DSM 22644 / CIP 104116 / JCM 14847 / LMG 12228 / 1C / PRS 101 / PAO1) protein is Outer membrane protein OprM (oprM).